Reading from the N-terminus, the 146-residue chain is Large ribosomal subunit protein uL15y (146 aa).

Composition is skewed to basic residues over residues 1 to 14 and 21 to 30; these read MATA…KRGH and RIGKHRKHPG. Positions 1 to 38 are disordered; sequence MATALKKNRKKRGHVSAGHGRIGKHRKHPGGRGNAGGM.

The protein belongs to the universal ribosomal protein uL15 family.

The polypeptide is Large ribosomal subunit protein uL15y (RPL27AB) (Arabidopsis thaliana (Mouse-ear cress)).